Reading from the N-terminus, the 35-residue chain is GLNRPSKRCLAGSAPCEFHKRSTCCSGHCIIWWCA.

Residues 1–35 (GLNRPSKRCLAGSAPCEFHKRSTCCSGHCIIWWCA) constitute a propeptide that is removed on maturation. 3 disulfides stabilise this stretch: Cys-9-Cys-25, Cys-16-Cys-29, and Cys-24-Cys-34.

Belongs to the conotoxin O1 superfamily. In terms of tissue distribution, expressed by the venom duct.

It is found in the secreted. In terms of biological role, probable neurotoxin with unknown target. Possibly targets ion channels. The sequence is that of Conotoxin Cal6.1c from Californiconus californicus (California cone).